Here is a 311-residue protein sequence, read N- to C-terminus: Malate dehydrogenase (311 aa).

Residues 7-13 and Asp34 contribute to the NAD(+) site; that span reads GAAGGIG. Positions 81 and 87 each coordinate substrate. Residues Asn94 and 117-119 contribute to the NAD(+) site; that span reads ITN. Substrate is bound by residues Asn119 and Arg153. Catalysis depends on His177, which acts as the Proton acceptor. Met227 is a binding site for NAD(+).

It belongs to the LDH/MDH superfamily. MDH type 1 family. Homodimer.

The enzyme catalyses (S)-malate + NAD(+) = oxaloacetate + NADH + H(+). In terms of biological role, catalyzes the reversible oxidation of malate to oxaloacetate. The sequence is that of Malate dehydrogenase from Haemophilus influenzae (strain PittGG).